We begin with the raw amino-acid sequence, 370 residues long: Cytochrome b (370 aa).

Helical transmembrane passes span 25–45 (FGSM…FLAV), 69–90 (WMMQ…YIHI), 105–125 (WLSG…GYVL), and 170–190 (FFAL…LHIL). Residues His-75 and His-89 each coordinate heme b. Heme b-binding residues include His-174 and His-188. His-193 contacts a ubiquinone. 4 helical membrane-spanning segments follow: residues 218–238 (YKDM…VSFF), 280–300 (LGGA…PFTH), 312–332 (FMQL…WTAT), and 339–358 (FTTI…ISNP).

This sequence belongs to the cytochrome b family. As to quaternary structure, the cytochrome bc1 complex contains 3 respiratory subunits (MT-CYB, CYC1 and UQCRFS1), 2 core proteins (UQCRC1 and UQCRC2) and probably 6 low-molecular weight proteins. Heme b serves as cofactor.

It is found in the mitochondrion inner membrane. In terms of biological role, component of the ubiquinol-cytochrome c reductase complex (complex III or cytochrome b-c1 complex) that is part of the mitochondrial respiratory chain. The b-c1 complex mediates electron transfer from ubiquinol to cytochrome c. Contributes to the generation of a proton gradient across the mitochondrial membrane that is then used for ATP synthesis. The polypeptide is Cytochrome b (MT-CYB) (Chilabothrus strigilatus fosteri (Bimini Island boa constrictor)).